A 183-amino-acid polypeptide reads, in one-letter code: ATP-dependent protease subunit HslV (183 aa).

Threonine 9 is an active-site residue. Na(+)-binding residues include alanine 164, cysteine 167, and threonine 170.

The protein belongs to the peptidase T1B family. HslV subfamily. As to quaternary structure, a double ring-shaped homohexamer of HslV is capped on each side by a ring-shaped HslU homohexamer. The assembly of the HslU/HslV complex is dependent on binding of ATP.

It localises to the cytoplasm. The catalysed reaction is ATP-dependent cleavage of peptide bonds with broad specificity.. Allosterically activated by HslU binding. Protease subunit of a proteasome-like degradation complex believed to be a general protein degrading machinery. The sequence is that of ATP-dependent protease subunit HslV from Hydrogenovibrio crunogenus (strain DSM 25203 / XCL-2) (Thiomicrospira crunogena).